A 263-amino-acid chain; its full sequence is MPYITKISAQKNNTERVNIFLDEKYAFSVDLDVLVQHDLKKGKELDEADIIDIQFGDAVKKGFQQAVDYLSYRMRSVKEVTDYLTKKEIPAPAISEIIHKLKHYKYVNDLEFAEAYVSTHRKTNSKGPSVLKKELKLKGIEDDHIEQALSQYPDDLQLEEAVKQVQKLVRKEKNRSTKEIEQRIKLQLQRKGFSFEIIDKALQEAYDGQEEEKEEEALLYMMEKAKRKVGYDGSFEKKMKVKQFLFRKGFDLDTIDHVLDKGE.

It belongs to the RecX family.

The protein localises to the cytoplasm. Modulates RecA activity. This chain is Regulatory protein RecX, found in Bacillus pumilus (strain SAFR-032).